Reading from the N-terminus, the 357-residue chain is Outer membrane porin protein OmpD (357 aa).

A signal peptide spans 1–21; the sequence is MKLKLVAVAVTTLLAAGAVNA.

The protein belongs to the Gram-negative porin family. Homotrimer.

The protein localises to the cell outer membrane. Functionally, forms pores that allow passive diffusion of small molecules across the outer membrane. The polypeptide is Outer membrane porin protein OmpD (ompD) (Citrobacter koseri (strain ATCC BAA-895 / CDC 4225-83 / SGSC4696)).